Consider the following 345-residue polypeptide: Phosphoribosylformylglycinamidine cyclo-ligase (345 aa).

This sequence belongs to the AIR synthase family.

The protein resides in the cytoplasm. It catalyses the reaction 2-formamido-N(1)-(5-O-phospho-beta-D-ribosyl)acetamidine + ATP = 5-amino-1-(5-phospho-beta-D-ribosyl)imidazole + ADP + phosphate + H(+). It participates in purine metabolism; IMP biosynthesis via de novo pathway; 5-amino-1-(5-phospho-D-ribosyl)imidazole from N(2)-formyl-N(1)-(5-phospho-D-ribosyl)glycinamide: step 2/2. The protein is Phosphoribosylformylglycinamidine cyclo-ligase of Myxococcus xanthus (strain DK1622).